The primary structure comprises 252 residues: 5'-nucleotidase SurE (252 aa).

Residues aspartate 8, aspartate 9, serine 39, and asparagine 91 each contribute to the a divalent metal cation site.

The protein belongs to the SurE nucleotidase family. The cofactor is a divalent metal cation.

It is found in the cytoplasm. The catalysed reaction is a ribonucleoside 5'-phosphate + H2O = a ribonucleoside + phosphate. In terms of biological role, nucleotidase that shows phosphatase activity on nucleoside 5'-monophosphates. This Geobacter metallireducens (strain ATCC 53774 / DSM 7210 / GS-15) protein is 5'-nucleotidase SurE.